Consider the following 238-residue polypeptide: Nuclear transcription factor Y subunit B-9 (238 aa).

Residues 64 to 70 (MPIANVI) mediate DNA binding. The interval 91–102 (IQECVSEYISFV) is subunit association domain (SAD). The interval 203–238 (RYYQNGSSGQDESSVGGGSSSSINGMPAFDHYGQYK) is disordered. The span at 208–227 (GSSGQDESSVGGGSSSSING) shows a compositional bias: low complexity.

This sequence belongs to the NFYB/HAP3 subunit family. As to quaternary structure, heterotrimeric transcription factor composed of three components, NF-YA, NF-YB and NF-YC. NF-YB and NF-YC must interact and dimerize for NF-YA association and DNA binding. Interacts with PRN1. In terms of tissue distribution, expressed in green siliques. Present in etiolated seedlings.

It is found in the nucleus. In terms of biological role, component of the NF-Y/HAP transcription factor complex. The NF-Y complex stimulates the transcription of various genes by recognizing and binding to a CCAAT motif in promoters. Acts as a central regulator of the embryogenesis. Required for the speciation of cotyledon identity and the completion of embryo maturation. Controls seed storage protein genes through the regulation of FUS3 and ABI3. Involved in the blue light (BL) and abscisic acid (ABA) signaling pathways. The polypeptide is Nuclear transcription factor Y subunit B-9 (NFYB9) (Arabidopsis thaliana (Mouse-ear cress)).